We begin with the raw amino-acid sequence, 360 residues long: Serine/threonine-protein kinase SRK2H (360 aa).

The Protein kinase domain maps to 4 to 260 (YEVVKDLGAG…LKEIKKHPWY (257 aa)). ATP contacts are provided by residues 10–18 (LGAGNFGVA) and lysine 33. Aspartate 123 serves as the catalytic Proton acceptor. A disordered region spans residues 298–360 (EARNPAPSSN…AHSCQEPPKA (63 aa)). Residues 313 to 343 (DDDEEDVEDEVEEEEEEEEEEEEEEEEEEDE) are compositionally biased toward acidic residues. The segment covering 344–360 (YEKHVKEAHSCQEPPKA) has biased composition (basic and acidic residues).

The protein belongs to the protein kinase superfamily. Ser/Thr protein kinase family. In terms of tissue distribution, expressed in seedlings.

It catalyses the reaction L-seryl-[protein] + ATP = O-phospho-L-seryl-[protein] + ADP + H(+). It carries out the reaction L-threonyl-[protein] + ATP = O-phospho-L-threonyl-[protein] + ADP + H(+). This is Serine/threonine-protein kinase SRK2H (SRK2H) from Arabidopsis thaliana (Mouse-ear cress).